Consider the following 595-residue polypeptide: Anthranilate synthase alpha subunit 1, chloroplastic (595 aa).

A chloroplast-targeting transit peptide spans 1-54; it reads MSSSMNVATMQALTFSRRLLPSVASRYLSSSSVTVTGYSGRSSAYAPSFRSIKC. At valine 55 the chain carries N-acetylvaline. Residues serine 115 and 356–358 each bind L-tryptophan; that span reads PYM. 391 to 392 serves as a coordination point for chorismate; sequence GT. A Mg(2+)-binding site is contributed by glutamate 418. Chorismate contacts are provided by residues tyrosine 506, arginine 526, 558–560, and glycine 560; that span reads GAG. Glutamate 573 is a Mg(2+) binding site.

The protein belongs to the anthranilate synthase component I family. As to quaternary structure, heterotetramer consisting of two non-identical subunits: a beta subunit and a large alpha subunit. Mg(2+) serves as cofactor. As to expression, expressed in the central cylinder of mature primary root zones, including pericycle and early lateral root primordia, and vasculature of cotyledons.

Its subcellular location is the plastid. The protein localises to the chloroplast. It carries out the reaction chorismate + L-glutamine = anthranilate + pyruvate + L-glutamate + H(+). It participates in amino-acid biosynthesis; L-tryptophan biosynthesis; L-tryptophan from chorismate: step 1/5. With respect to regulation, feedback inhibition by tryptophan. Its function is as follows. Part of a heterotetrameric complex that catalyzes the two-step biosynthesis of anthranilate, an intermediate in the biosynthesis of L-tryptophan. In the first step, the glutamine-binding beta subunit of anthranilate synthase (AS) provides the glutamine amidotransferase activity which generates ammonia as a substrate that, along with chorismate, is used in the second step, catalyzed by the large alpha subunit of AS to produce anthranilate. Plays an important regulatory role in auxin production via the tryptophan-dependent biosynthetic pathway. This chain is Anthranilate synthase alpha subunit 1, chloroplastic (ASA1), found in Arabidopsis thaliana (Mouse-ear cress).